A 151-amino-acid chain; its full sequence is Phosphopantetheine adenylyltransferase (151 aa).

Ser9 contacts substrate. ATP contacts are provided by residues 9–10 and His17; that span reads SF. The substrate site is built by Lys41, Thr73, and Arg87. Residues 88–90, Glu98, and 122–128 each bind ATP; these read GLR and TSFISSS.

The protein belongs to the bacterial CoaD family. As to quaternary structure, homohexamer. Mg(2+) serves as cofactor.

The protein resides in the cytoplasm. It catalyses the reaction (R)-4'-phosphopantetheine + ATP + H(+) = 3'-dephospho-CoA + diphosphate. Its pathway is cofactor biosynthesis; coenzyme A biosynthesis; CoA from (R)-pantothenate: step 4/5. In terms of biological role, reversibly transfers an adenylyl group from ATP to 4'-phosphopantetheine, yielding dephospho-CoA (dPCoA) and pyrophosphate. The protein is Phosphopantetheine adenylyltransferase of Flavobacterium psychrophilum (strain ATCC 49511 / DSM 21280 / CIP 103535 / JIP02/86).